The primary structure comprises 471 residues: 5-hydroxytryptamine receptor 2A (471 aa).

At 1 to 80 (MDILCEENTS…LQEKNWSALL (80 aa)) the chain is on the extracellular side. Residues N8, N38, N44, N51, and N54 are each glycosylated (N-linked (GlcNAc...) asparagine). Residues 81–97 (TAVVIILTIAGNILVIM) form a helical membrane-spanning segment. Residues 98 to 111 (AVSLEKKLQNATNY) lie on the Cytoplasmic side of the membrane. A helical membrane pass occupies residues 112 to 137 (FLMSLAIADMLLGFLVMPVSMLTILY). Residues 138–146 (GYRWPLPSK) are Extracellular-facing. Residues 147–171 (LCAVWIYLDVLFSTASIMHLCAISL) traverse the membrane as a helical segment. A disulfide bond links C148 and C227. D155 lines the serotonin pocket. Positions 172 to 174 (DRY) match the DRY motif; important for ligand-induced conformation changes motif. The Cytoplasmic segment spans residues 172–191 (DRYVAIQNPIHHSRFNSRTK). A helical transmembrane segment spans residues 192–215 (AFLKIIAVWTISVGISMPIPVFGL). Residues 216–232 (QDDSKVFKEGSCLLADD) lie on the Extracellular side of the membrane. A helical membrane pass occupies residues 233–258 (NFVLIGSFVSFFIPLTIMVITYFLTI). The Cytoplasmic portion of the chain corresponds to 259–322 (KSLQKEATLC…QSISNEQKAC (64 aa)). Residue S280 is modified to Phosphoserine. The helical transmembrane segment at 323–348 (KVLGIVFFLFVVMWCPFFITNIMAVI) threads the bilayer. N343 contributes to the serotonin binding site. C349 and C353 are joined by a disulfide. Over 349–356 (CKESCNED) the chain is Extracellular. The helical transmembrane segment at 357-382 (VIGALLNVFVWIGYLSSAVNPLVYTL) threads the bilayer. Residues 376–380 (NPLVY) carry the NPxxY motif; important for ligand-induced conformation changes and signaling motif. The Cytoplasmic segment spans residues 383–471 (FNKTYRSAFS…DGVNEKVSCV (89 aa)). A disordered region spans residues 450–471 (KQHSEDASKDNSDGVNEKVSCV). A compositionally biased stretch (basic and acidic residues) spans 451 to 465 (QHSEDASKDNSDGVN). The short motif at 469–471 (SCV) is the PDZ-binding element.

The protein belongs to the G-protein coupled receptor 1 family. Interacts (via C-terminus) with MPDZ and PATJ. May interact (via C-terminus) with MPP3, PRDX6, DLG4, DLG1, CASK, APBA1 and MAGI2. Interacts with GRM2 and DRD2; this may affect signaling.

The protein localises to the cell membrane. Its subcellular location is the cell projection. It localises to the dendrite. It is found in the axon. The protein resides in the cytoplasmic vesicle. The protein localises to the membrane. Its subcellular location is the caveola. It localises to the presynapse. G-protein coupled receptor activity is regulated by lipids: oleamide increases HTR2A-mediated activity. G-protein coupled receptor for 5-hydroxytryptamine (serotonin). Also functions as a receptor for various drugs and psychoactive substances, including mescaline, psilocybin, 1-(2,5-dimethoxy-4-iodophenyl)-2-aminopropane (DOI) and lysergic acid diethylamide (LSD). Ligand binding causes a conformation change that triggers signaling via guanine nucleotide-binding proteins (G proteins) and modulates the activity of downstream effectors. HTR2A is coupled to G(q)/G(11) G alpha proteins and activates phospholipase C-beta, releasing diacylglycerol (DAG) and inositol 1,4,5-trisphosphate (IP3) second messengers that modulate the activity of phosphatidylinositol 3-kinase and promote the release of Ca(2+) ions from intracellular stores, respectively. Beta-arrestin family members inhibit signaling via G proteins and mediate activation of alternative signaling pathways. Affects neural activity, perception, cognition and mood. Plays a role in the regulation of behavior, including responses to anxiogenic situations and psychoactive substances. Plays a role in intestinal smooth muscle contraction, and may play a role in arterial vasoconstriction. The chain is 5-hydroxytryptamine receptor 2A (HTR2A) from Macaca mulatta (Rhesus macaque).